The chain runs to 896 residues: Alanine--tRNA ligase (896 aa).

Zn(2+) is bound by residues histidine 574, histidine 578, cysteine 677, and histidine 681.

Belongs to the class-II aminoacyl-tRNA synthetase family. The cofactor is Zn(2+).

It localises to the cytoplasm. The catalysed reaction is tRNA(Ala) + L-alanine + ATP = L-alanyl-tRNA(Ala) + AMP + diphosphate. Functionally, catalyzes the attachment of alanine to tRNA(Ala) in a two-step reaction: alanine is first activated by ATP to form Ala-AMP and then transferred to the acceptor end of tRNA(Ala). Also edits incorrectly charged Ser-tRNA(Ala) and Gly-tRNA(Ala) via its editing domain. This is Alanine--tRNA ligase from Mycoplasma mycoides subsp. mycoides SC (strain CCUG 32753 / NCTC 10114 / PG1).